The chain runs to 570 residues: Hydroxylamine reductase (570 aa).

4 residues coordinate [4Fe-4S] cluster: C5, C8, C17, and C23. 8 residues coordinate hybrid [4Fe-2O-2S] cluster: H266, E290, C334, C425, C453, C478, E513, and K515. Cysteine persulfide is present on C425.

It belongs to the HCP family. [4Fe-4S] cluster serves as cofactor. Hybrid [4Fe-2O-2S] cluster is required as a cofactor.

It localises to the cytoplasm. It carries out the reaction A + NH4(+) + H2O = hydroxylamine + AH2 + H(+). Its function is as follows. Catalyzes the reduction of hydroxylamine to form NH(3) and H(2)O. The chain is Hydroxylamine reductase from Clostridium botulinum (strain Okra / Type B1).